Here is a 75-residue protein sequence, read N- to C-terminus: DNA-directed RNA polymerase subunit omega (75 aa).

The protein belongs to the RNA polymerase subunit omega family. The RNAP catalytic core consists of 2 alpha, 1 beta, 1 beta' and 1 omega subunit. When a sigma factor is associated with the core the holoenzyme is formed, which can initiate transcription.

It catalyses the reaction RNA(n) + a ribonucleoside 5'-triphosphate = RNA(n+1) + diphosphate. Promotes RNA polymerase assembly. Latches the N- and C-terminal regions of the beta' subunit thereby facilitating its interaction with the beta and alpha subunits. This is DNA-directed RNA polymerase subunit omega from Nitratidesulfovibrio vulgaris (strain DSM 19637 / Miyazaki F) (Desulfovibrio vulgaris).